Here is a 275-residue protein sequence, read N- to C-terminus: Translation initiation factor 2 subunit alpha (275 aa).

The 72-residue stretch at 12–83 folds into the S1 motif domain; sequence GELVVATVKR…KKGHIDLSLR (72 aa).

The protein belongs to the eIF-2-alpha family. In terms of assembly, heterotrimer composed of an alpha, a beta and a gamma chain.

EIF-2 functions in the early steps of protein synthesis by forming a ternary complex with GTP and initiator tRNA. The protein is Translation initiation factor 2 subunit alpha of Pyrococcus furiosus (strain ATCC 43587 / DSM 3638 / JCM 8422 / Vc1).